We begin with the raw amino-acid sequence, 1127 residues long: Glutamate receptor-interacting protein 1 (1127 aa).

A lipid anchor (S-palmitoyl cysteine) is attached at glutamine 11. Serine 43 bears the Phosphoserine mark. 6 consecutive PDZ domains span residues 53–136 (VVEL…EYEL), 150–238 (TVEV…EYDV), 252–336 (LVEV…LPHH), 471–560 (EVVL…EFDV), 572–657 (HVKL…RKDE), and 672–754 (TVEL…KKQT). 3 disordered regions span residues 752 to 802 (KQTD…PSVD), 840 to 865 (KQRTSLSPVPKPRSQTYPDVGLSNED), and 942 to 980 (MARSQLGRQASFQERSSSRPHYSQTTRSNTLPSDVGRKS). 2 stretches are compositionally biased toward polar residues: residues 840 to 856 (KQRTSLSPVPKPRSQTY) and 947 to 973 (LGRQASFQERSSSRPHYSQTTRSNTLP). One can recognise a PDZ 7 domain in the interval 1003-1085 (KVTLYKDSGM…KLDLVISRNP (83 aa)). The interval 1108–1127 (FFQQPSHGGNLETREPTNTL) is disordered.

In terms of assembly, interacts with EFNB3, GRIA2, GRIA3, GRIPAP1/GRASP1, PPFIA1, PPFIA4, FRAS1, PTPRF, liprins-alpha and the C-terminal tail of PRLHR. Can form homomultimers or heteromultimers with GRIP2. Interacts with EFNB1, EPHA7, EPHB2, KIF5A, KIF5B and KIF5C. Forms a ternary complex with GRIA2 and CSPG4. Interacts with ATAD1 in an ATP-dependent manner. ATAD1-catalyzed ATP hydrolysis disrupts binding to ATAD1 and to GRIA2 and leads to AMPAR complex disassembly. Interacts with SLC30A9 and PLCD4. Interacts with BUD23. Forms a complex with NSG1, GRIA2 and STX12; controls the intracellular fate of AMPAR and the endosomal sorting of the GRIA2 subunit toward recycling and membrane targeting. Interacts with NSG1. Post-translationally, palmitoylation of isoform 2. In terms of tissue distribution, expressed in brain. Isoform 2 is the major isoform in brain. Expressed in oligodendrocyte lineage cells.

The protein resides in the membrane. Its subcellular location is the cytoplasmic vesicle. It localises to the perikaryon. The protein localises to the cell projection. It is found in the dendrite. The protein resides in the cytoplasm. Its subcellular location is the endomembrane system. It localises to the postsynaptic cell membrane. The protein localises to the postsynaptic density. It is found in the endoplasmic reticulum membrane. May play a role as a localized scaffold for the assembly of a multiprotein signaling complex and as mediator of the trafficking of its binding partners at specific subcellular location in neurons. Through complex formation with NSG1, GRIA2 and STX12 controls the intracellular fate of AMPAR and the endosomal sorting of the GRIA2 subunit toward recycling and membrane targeting. The chain is Glutamate receptor-interacting protein 1 (Grip1) from Mus musculus (Mouse).